The primary structure comprises 1525 residues: MPSAHAFDMRITSDIYKPDQHLPMETMKVCAVTMTEDLQEDDGSSDESDNDEREDHSKTGVSQQRITQNAKFKALLAQRADTGPIHDVSVTHDLPDAQLSTAHLVAKQDLGIGTLDPREYQLELFERAKVQNTIAVLDTGSGKTLIAVLLLKHTLEKELNDRMEGKPHRIAFFLVDSVTLAYQQAAVLRNNLDQSVGHFFGAMGTDLWSKSVWDQHFQKNMVIVCTAEILNQCLLNSYIKMSQINILIFDEAHHTKKDHPYARIIRDSYLEEVYSKRPRIFGMTASPIDTKGDIVDEATRLEKLLDSRIATTSNMSLLRQVARRPVERVWSFNKLEQPFATSLYKHLEDRFGDMACLEGIFRFAWQASSELGRWCSDRAWARALADDVLPKLEGSVRKTANSETSSNVPESAYKEILRITEASEIVKSYAFSSPETFGQLSPKVQVLREELARYFGRQTETKCIVFTQKRYTALILAELFQTLNIPFLRPGVLIGVRSGDLAGMNITFRQQFISLVKFRTGEINCLFATSVAEEGLDIPDCNLVVRFDLYQTLIQYVQSRGRARHFNSTYASMVERGNLEHEQRLLEVQDAEMMQSFCRTLPEDRLLYGFDHDLDTVLQKDEGNRTFRIKSTGAKLTYHSATAILARYASSLQYEKEFSAQVTYVVLPINGAFVCEVILPEKSPIRGLTGSPAMKKSIAKRSAAFDTCLLLRKNKLLDDHFNSIYHRRLPAMRNAKLAITSKRTSQYDMISKPSLWGRKQGMPPKELHGTFITFLPSMQLSHEPAPLLLFTRERLPHFPEFPIFLDDDVETTIITTPLEKQLLLSEKEVDALTVFTLRVFRDVFHKTYDKEPEKMAYWLAPAKVQSSYLPSYDPRQILDWESLTYVRDNDSIPFSTNADPESWVDLFVFDAWDGRCRFFTVGVEHSLTPSSPPPPFVARRRHMNDVMNYCLSLSKNSRAKFLSTCHWDQPVLRAELVRLRRNLLDKMTDTERDVETRCFICIEPLKVSAIPASTAFSCLAFPAIISRIDAYLISLQGCESLNFTVKLDLALEAFTKDSDNTDEHRAQQIHVQRGMGRNYERLEFLGDCFLKMATSIALFTQNPDDDEFDYHVNRMCLICNKNLFNAAVDKEIYKYIRSRGFSRHTWYPEGLKLLQGKDHSRKATTESKHALAEKTIADVCEALIGAALLSGGPDHRFDMAVKAVTTLVNSPSHKAERWKDYISFYTIPKYQRRAADGAELYLSRKIEEKLSYRFRYPTLLGSAFTHPSYPSAWAKVPCYQRLEFLGDSLIDMVCVEDLFARFPDRDPQWLTEHKMAMVSNKFLGALAVKLGLHTHLKYFSAPLQSQITQYAEEIQTAEGESEGAVDYWTVTKDPPKCLPDMVEAYVGAVFVDSDFNFEVIERFFRDYIKPFFEDMAIYDTFANKHPTTFLHNRLTNEFGCVNYCLKAGEMPSIDGAPAGVLAAVIVHDVVIAEGTATSGRYAKVKASEKALAVLDEISSAEFQRKFRCDCRESGDSARLDIGTAI.

Positions 37-52 (DLQEDDGSSDESDNDE) are enriched in acidic residues. A disordered region spans residues 37–65 (DLQEDDGSSDESDNDEREDHSKTGVSQQR). In terms of domain architecture, Helicase ATP-binding spans 124 to 305 (LFERAKVQNT…DEATRLEKLL (182 aa)). 137–144 (LDTGSGKT) provides a ligand contact to ATP. Positions 250-253 (DEAH) match the DEAH box motif. In terms of domain architecture, Helicase C-terminal spans 439–605 (QLSPKVQVLR…SFCRTLPEDR (167 aa)). In terms of domain architecture, Dicer dsRNA-binding fold spans 641–731 (ATAILARYAS…NSIYHRRLPA (91 aa)). Residues 881–1009 (ESLTYVRDND…ICIEPLKVSA (129 aa)) form the PAZ domain. RNase III domains are found at residues 1032 to 1192 (LISL…LSGG) and 1243 to 1394 (SRKI…VDSD). Mg(2+) contacts are provided by Glu-1283, Asp-1380, and Glu-1383. The DRBM domain occupies 1428–1496 (TFLHNRLTNE…SEKALAVLDE (69 aa)). Zn(2+)-binding residues include Cys-1440, His-1467, Cys-1508, and Cys-1510.

It belongs to the helicase family. Dicer subfamily. Mg(2+) serves as cofactor. It depends on Mn(2+) as a cofactor.

Functionally, dicer-like endonuclease involved in cleaving double-stranded RNA in the RNA interference (RNAi) pathway. Produces 21 to 25 bp dsRNAs (siRNAs) which target the selective destruction of homologous RNAs leading to sequence-specific suppression of gene expression, called post-transcriptional gene silencing (PTGS). Part of a broad host defense response against viral infection and transposons. This Aspergillus niger (strain ATCC MYA-4892 / CBS 513.88 / FGSC A1513) protein is Dicer-like protein 1 (dcl1).